The chain runs to 471 residues: 3-isopropylmalate dehydratase large subunit (471 aa).

Residues Cys-349, Cys-409, and Cys-412 each contribute to the [4Fe-4S] cluster site.

It belongs to the aconitase/IPM isomerase family. LeuC type 1 subfamily. In terms of assembly, heterodimer of LeuC and LeuD. [4Fe-4S] cluster is required as a cofactor.

It carries out the reaction (2R,3S)-3-isopropylmalate = (2S)-2-isopropylmalate. It functions in the pathway amino-acid biosynthesis; L-leucine biosynthesis; L-leucine from 3-methyl-2-oxobutanoate: step 2/4. Catalyzes the isomerization between 2-isopropylmalate and 3-isopropylmalate, via the formation of 2-isopropylmaleate. The sequence is that of 3-isopropylmalate dehydratase large subunit from Aliivibrio salmonicida (strain LFI1238) (Vibrio salmonicida (strain LFI1238)).